Reading from the N-terminus, the 337-residue chain is tRNA N6-adenosine threonylcarbamoyltransferase (337 aa).

Fe cation-binding residues include His-111 and His-115. Substrate contacts are provided by residues 134-138, Asp-167, Gly-180, and Asn-272; that span reads LVSGG. Residue Asp-300 participates in Fe cation binding.

It belongs to the KAE1 / TsaD family. Fe(2+) is required as a cofactor.

It localises to the cytoplasm. The catalysed reaction is L-threonylcarbamoyladenylate + adenosine(37) in tRNA = N(6)-L-threonylcarbamoyladenosine(37) in tRNA + AMP + H(+). Functionally, required for the formation of a threonylcarbamoyl group on adenosine at position 37 (t(6)A37) in tRNAs that read codons beginning with adenine. Is involved in the transfer of the threonylcarbamoyl moiety of threonylcarbamoyl-AMP (TC-AMP) to the N6 group of A37, together with TsaE and TsaB. TsaD likely plays a direct catalytic role in this reaction. This Pseudoalteromonas translucida (strain TAC 125) protein is tRNA N6-adenosine threonylcarbamoyltransferase.